The sequence spans 465 residues: Cysteine--tRNA ligase (465 aa).

C27 is a binding site for Zn(2+). A 'HIGH' region motif is present at residues 29–39 (PTVYDDAHLGH). C207, H237, and E241 together coordinate Zn(2+). A 'KMSKS' region motif is present at residues 269–273 (KMSKS). K272 serves as a coordination point for ATP.

It belongs to the class-I aminoacyl-tRNA synthetase family. As to quaternary structure, monomer. Zn(2+) is required as a cofactor.

Its subcellular location is the cytoplasm. It carries out the reaction tRNA(Cys) + L-cysteine + ATP = L-cysteinyl-tRNA(Cys) + AMP + diphosphate. The protein is Cysteine--tRNA ligase of Helicobacter acinonychis (strain Sheeba).